The primary structure comprises 478 residues: Membrane-bound lytic murein transglycosylase F (478 aa).

Residues Met1 to Val22 form the signal peptide. Positions Glu23–Val257 are non-LT domain. Residues Lys258–Lys478 are LT domain. Glu302 is a catalytic residue. The disordered stretch occupies residues Ser446–Lys478. Positions Ser451 to Ser461 are enriched in acidic residues.

It in the N-terminal section; belongs to the bacterial solute-binding protein 3 family. In the C-terminal section; belongs to the transglycosylase Slt family.

The protein localises to the cell outer membrane. The enzyme catalyses Exolytic cleavage of the (1-&gt;4)-beta-glycosidic linkage between N-acetylmuramic acid (MurNAc) and N-acetylglucosamine (GlcNAc) residues in peptidoglycan, from either the reducing or the non-reducing ends of the peptidoglycan chains, with concomitant formation of a 1,6-anhydrobond in the MurNAc residue.. Functionally, murein-degrading enzyme that degrades murein glycan strands and insoluble, high-molecular weight murein sacculi, with the concomitant formation of a 1,6-anhydromuramoyl product. Lytic transglycosylases (LTs) play an integral role in the metabolism of the peptidoglycan (PG) sacculus. Their lytic action creates space within the PG sacculus to allow for its expansion as well as for the insertion of various structures such as secretion systems and flagella. This is Membrane-bound lytic murein transglycosylase F from Shewanella sp. (strain MR-4).